The primary structure comprises 1199 residues: DNA-directed RNA polymerase subunit beta' (1199 aa).

The Zn(2+) site is built by cysteine 60, cysteine 62, cysteine 75, and cysteine 78. The Mg(2+) site is built by aspartate 449, aspartate 451, and aspartate 453. Zn(2+) is bound by residues cysteine 818, cysteine 892, cysteine 899, and cysteine 902.

This sequence belongs to the RNA polymerase beta' chain family. The RNAP catalytic core consists of 2 alpha, 1 beta, 1 beta' and 1 omega subunit. When a sigma factor is associated with the core the holoenzyme is formed, which can initiate transcription. Mg(2+) serves as cofactor. Zn(2+) is required as a cofactor.

The enzyme catalyses RNA(n) + a ribonucleoside 5'-triphosphate = RNA(n+1) + diphosphate. Functionally, DNA-dependent RNA polymerase catalyzes the transcription of DNA into RNA using the four ribonucleoside triphosphates as substrates. The sequence is that of DNA-directed RNA polymerase subunit beta' from Bacillus velezensis (strain DSM 23117 / BGSC 10A6 / LMG 26770 / FZB42) (Bacillus amyloliquefaciens subsp. plantarum).